Reading from the N-terminus, the 593-residue chain is ATP-dependent RNA helicase MRH4, mitochondrial (593 aa).

A mitochondrion-targeting transit peptide spans methionine 1–alanine 106. Over residues glycine 42 to glycine 51 the composition is skewed to low complexity. The interval glycine 42–lysine 63 is disordered. Polar residues predominate over residues threonine 52–lysine 63. Positions valine 130–glutamine 137 match the Q motif motif. The Helicase ATP-binding domain maps to isoleucine 181–isoleucine 399. Alanine 194–threonine 201 is an ATP binding site. Positions aspartate 347 to aspartate 350 match the DEAD box motif. In terms of domain architecture, Helicase C-terminal spans alanine 433 to glycine 593.

It belongs to the DEAD box helicase family. MRH4 subfamily.

The protein resides in the mitochondrion. The enzyme catalyses ATP + H2O = ADP + phosphate + H(+). Functionally, ATP-binding RNA helicase involved in mitochondrial RNA metabolism. Required for maintenance of mitochondrial DNA. The sequence is that of ATP-dependent RNA helicase MRH4, mitochondrial (MRH4) from Scheffersomyces stipitis (strain ATCC 58785 / CBS 6054 / NBRC 10063 / NRRL Y-11545) (Yeast).